A 386-amino-acid polypeptide reads, in one-letter code: Copper-containing nitrite reductase (386 aa).

A signal peptide spans 1–18 (MKRQALAAIIASMFALAA). Cys19 is lipidated: N-palmitoyl cysteine. Cys19 carries the S-diacylglycerol cysteine lipid modification. Plastocyanin-like domains lie at 97 to 191 (WTFD…ILVE) and 241 to 342 (GHVG…LKVE). Positions 130, 135, 170, 171, 179, and 184 each coordinate Cu cation. His135 provides a ligand contact to substrate. His276 is a binding site for substrate. Residue His325 coordinates Cu cation. Positions 363 to 386 (GAAPAASAPAASAPAASAPAKSDY) are disordered. Residues 364 to 386 (AAPAASAPAASAPAASAPAKSDY) are compositionally biased toward low complexity. 3 consecutive repeat copies span residues 367-371 (AASAP), 372-376 (AASAP), and 377-381 (AASAP). Residues 367–381 (AASAPAASAPAASAP) are 3 X 5 AA tandem repeats of A-A-S-A-P.

This sequence belongs to the multicopper oxidase family. Homotrimer. Requires Cu(+) as cofactor. The cofactor is Cu(2+).

The protein resides in the cell outer membrane. The catalysed reaction is nitric oxide + Fe(III)-[cytochrome c] + H2O = Fe(II)-[cytochrome c] + nitrite + 2 H(+). Functionally, catalyzes the reduction of nitrite to nitric oxide (NO). It could be essential for growth and survival in oxygen-depleted environments. The protein is Copper-containing nitrite reductase (aniA) of Neisseria meningitidis serogroup A / serotype 4A (strain DSM 15465 / Z2491).